The sequence spans 222 residues: Cell division protein FtsQ (222 aa).

At 1-5 (MNKKV) the chain is on the cytoplasmic side. Residues 6–26 (IAIVVGVVVVLVAILGVVAWF) traverse the membrane as a helical segment. Residues 27-222 (VPILKVGNIE…ISSPSMVTVR (196 aa)) lie on the Extracellular side of the membrane. Residues 30 to 98 (LKVGNIEVTG…STITVELTER (69 aa)) enclose the POTRA domain.

This sequence belongs to the FtsQ/DivIB family. FtsQ subfamily.

It localises to the cell membrane. In terms of biological role, essential cell division protein. This Corynebacterium glutamicum (strain ATCC 13032 / DSM 20300 / JCM 1318 / BCRC 11384 / CCUG 27702 / LMG 3730 / NBRC 12168 / NCIMB 10025 / NRRL B-2784 / 534) protein is Cell division protein FtsQ.